Consider the following 447-residue polypeptide: N-succinylarginine dihydrolase (447 aa).

Substrate is bound by residues 19–28 (AGLSFGNEAS), N110, and 137–138 (HR). The active site involves E174. A substrate-binding site is contributed by R214. H250 is an active-site residue. Residues D252 and N365 each coordinate substrate. Residue C371 is the Nucleophile of the active site.

Belongs to the succinylarginine dihydrolase family. In terms of assembly, homodimer.

The catalysed reaction is N(2)-succinyl-L-arginine + 2 H2O + 2 H(+) = N(2)-succinyl-L-ornithine + 2 NH4(+) + CO2. It participates in amino-acid degradation; L-arginine degradation via AST pathway; L-glutamate and succinate from L-arginine: step 2/5. In terms of biological role, catalyzes the hydrolysis of N(2)-succinylarginine into N(2)-succinylornithine, ammonia and CO(2). This is N-succinylarginine dihydrolase from Acinetobacter baumannii (strain SDF).